The sequence spans 151 residues: Small ribosomal subunit protein uS19 (151 aa).

The interval 1-23 (MVVNKQGSVKSIKRKARKSRKVT) is disordered. Residues 11 to 23 (SIKRKARKSRKVT) are compositionally biased toward basic residues.

The protein belongs to the universal ribosomal protein uS19 family.

In terms of biological role, protein S19 forms a complex with S13 that binds strongly to the 16S ribosomal RNA. The sequence is that of Small ribosomal subunit protein uS19 (rps19) from Thermoplasma volcanium (strain ATCC 51530 / DSM 4299 / JCM 9571 / NBRC 15438 / GSS1).